Here is a 1280-residue protein sequence, read N- to C-terminus: Ankyrin repeat and sterile alpha motif domain-containing protein 1B (1280 aa).

7 ANK repeats span residues 2 to 31 (GKEQ…GLLG), 57 to 86 (SGYT…STNV), 90 to 119 (KGCF…SHSR), 126 to 155 (EKET…DPSM), 159 to 188 (RGET…NLMS), 192 to 221 (RKHT…DVNT), and 224 to 253 (EKGS…DANI). Disordered regions lie at residues 299 to 322 (RHRP…LRHK), 361 to 399 (MESF…EEKS), 479 to 573 (SVSD…STGS), 704 to 723 (NGEA…SNTG), and 755 to 791 (SNLV…PSFT). The span at 482-491 (DAERGNHGDD) shows a compositional bias: basic and acidic residues. 3 stretches are compositionally biased toward polar residues: residues 520–550 (KQRT…SSLG), 707–723 (ARSN…SNTG), and 770–782 (SRGQ…SSPS). SAM domains lie at 824 to 890 (CPVQ…LPRV) and 898 to 963 (NNPT…RLHE). 2 disordered regions span residues 960–994 (RLHE…LSQA) and 1208–1243 (GSST…MDQK). Over residues 980-994 (GNHTPPQLSPSLSQA) the composition is skewed to polar residues. Residues 1071 to 1223 (IFQSCDYEAY…ESFDSKPSKP (153 aa)) enclose the PID domain.

The protein resides in the cytoplasm. This Danio rerio (Zebrafish) protein is Ankyrin repeat and sterile alpha motif domain-containing protein 1B (anks1b).